We begin with the raw amino-acid sequence, 757 residues long: Polyribonucleotide nucleotidyltransferase (757 aa).

Positions 482 and 488 each coordinate Mg(2+). The KH domain maps to 549–608 (PRMLSFYIDKDKISAAIGSKGKNIRSVCERSNAKIEIGDDGKVSVFATSGTEAEIAKSMM). The S1 motif domain maps to 618–686 (GSIVDVKVVR…KGGCPKLSRR (69 aa)). The tract at residues 698 to 757 (GELYNEERKDGPNDRDNYYNNSFSRKPGGSHHKRPPRPHSGFSNRNRPKFGNNDSSSGFY) is disordered. The span at 702 to 714 (NEERKDGPNDRDN) shows a compositional bias: basic and acidic residues. Basic residues predominate over residues 725–734 (GGSHHKRPPR).

The protein belongs to the polyribonucleotide nucleotidyltransferase family. Mg(2+) serves as cofactor.

It is found in the cytoplasm. It catalyses the reaction RNA(n+1) + phosphate = RNA(n) + a ribonucleoside 5'-diphosphate. In terms of biological role, involved in mRNA degradation. Catalyzes the phosphorolysis of single-stranded polyribonucleotides processively in the 3'- to 5'-direction. This chain is Polyribonucleotide nucleotidyltransferase, found in Wolbachia pipientis wMel.